We begin with the raw amino-acid sequence, 435 residues long: MAQAVWSRLGRILWLACLLPWAPAGVAAGLYELNLTTDSPATTGAVVTISASLVAKDNGSLALPADAHLYRFHWIHTPLVLTGKMEKGLSSTIRVVGHVPGEFPVSVWVTAADCWMCQPVARGFVVLPITEFLVGDLVVTQNTSLPWPSSYLTKTVLKVSFLLHDPSNFLKTALFLYSWDFGDGTQMVTEDSVVYYNYSIIGTFTVKLKVVAEWEEVEPDATRAVKQKTGDFSASLKLQETLRGIQVLGPTLIQTFQKMTVTLNFLGSPPLTVCWRLKPECLPLEEGECHPVSVASTAYNLTHTFRDPGDYCFSIRAENIISKTHQYHKIQVWPSRIQPAVFAFPCATLITVMLAFIMYMTLRNATQQKDMVEVADFDFSPMSDKNPEPPSGVRCCCQMCCGPFLLETPSEYLEIVRENHGLLPPLYKSVKTYTV.

Residues 1–24 (MAQAVWSRLGRILWLACLLPWAPA) form the signal peptide. The Extracellular portion of the chain corresponds to 25-339 (GVAAGLYELN…IQVWPSRIQP (315 aa)). N-linked (GlcNAc...) asparagine glycosylation is found at Asn34, Asn197, and Asn300. Residues 147–233 (WPSSYLTKTV…AVKQKTGDFS (87 aa)) enclose the PKD domain. A helical transmembrane segment spans residues 340–360 (AVFAFPCATLITVMLAFIMYM). At 361-435 (TLRNATQQKD…LYKSVKTYTV (75 aa)) the chain is on the cytoplasmic side.

It localises to the golgi apparatus membrane. The chain is Transmembrane protein 130 (TMEM130) from Homo sapiens (Human).